Consider the following 398-residue polypeptide: tRNA N6-adenosine threonylcarbamoyltransferase (398 aa).

His162, His166, and Tyr183 together coordinate a divalent metal cation. Residues 183 to 187 (YVSGG), Asp215, Gly230, Glu234, and Asn329 each bind substrate. Position 357 (Asp357) interacts with a divalent metal cation.

This sequence belongs to the KAE1 / TsaD family. Component of the EKC/KEOPS complex composed of at least BUD32, CGI121, GON7, KAE1 and PCC1; the whole complex dimerizes. It depends on a divalent metal cation as a cofactor.

Its subcellular location is the cytoplasm. It is found in the nucleus. The enzyme catalyses L-threonylcarbamoyladenylate + adenosine(37) in tRNA = N(6)-L-threonylcarbamoyladenosine(37) in tRNA + AMP + H(+). Component of the EKC/KEOPS complex that is required for the formation of a threonylcarbamoyl group on adenosine at position 37 (t(6)A37) in tRNAs that read codons beginning with adenine. The complex is probably involved in the transfer of the threonylcarbamoyl moiety of threonylcarbamoyl-AMP (TC-AMP) to the N6 group of A37. KAE1 likely plays a direct catalytic role in this reaction, but requires other protein(s) of the complex to fulfill this activity. The EKC/KEOPS complex also promotes both telomere uncapping and telomere elongation. The complex is required for efficient recruitment of transcriptional coactivators. This Cryptococcus neoformans var. neoformans serotype D (strain B-3501A) (Filobasidiella neoformans) protein is tRNA N6-adenosine threonylcarbamoyltransferase.